The primary structure comprises 262 residues: Merozoite surface protein 2 (262 aa).

The first 20 residues, 1 to 20 (MKVIKTLSIINFFIFVTFNI), serve as a signal peptide directing secretion. N-linked (GlcNAc...) asparagine glycosylation is found at asparagine 22 and asparagine 36. The tract at residues 44–188 (AESKPPTGTG…EQTESPELQS (145 aa)) is polymorphic region. The interval 44–223 (AESKPPTGTG…DSQKECTDGN (180 aa)) is disordered. Over residues 51-66 (GTGGSGSAGSGAGASA) the composition is skewed to gly residues. Residues 67-111 (GNGANPGADAERSPSTPATPATPATTTTTTTTNDAEASTSTSSEN) show a composition bias toward low complexity. The span at 112–127 (PNHKNAETNPKGKGEV) shows a compositional bias: basic and acidic residues. Polar residues-rich tracts occupy residues 129 to 155 (KPNQ…NVPP) and 162 to 190 (KSPT…QSAP). An N-linked (GlcNAc...) asparagine glycan is attached at asparagine 139. Asparagine 211 is a glycosylation site (N-linked (GlcNAc...) asparagine). An intrachain disulfide couples cysteine 219 to cysteine 227. Asparagine 235 and asparagine 236 each carry an N-linked (GlcNAc...) asparagine glycan. Asparagine 236 carries GPI-anchor amidated asparagine lipidation. Positions 237–262 (SSNIASINKFVVLISATLVLSFAIFI) are cleaved as a propeptide — removed in mature form.

The protein localises to the cell membrane. May play a role in the merozoite attachment to the erythrocyte. The chain is Merozoite surface protein 2 from Plasmodium falciparum (isolate Camp / Malaysia).